The sequence spans 250 residues: LexA repressor (250 aa).

The span at 1-21 (MTSQERGTRRGDTRGNVRDFP) shows a compositional bias: basic and acidic residues. Positions 1 to 33 (MTSQERGTRRGDTRGNVRDFPDSPADASGLTQR) are disordered. Positions 54-74 (VREIGEAVGLTSTSSVAHQLK) form a DNA-binding region, H-T-H motif. Residues S174 and K211 each act as for autocatalytic cleavage activity in the active site.

This sequence belongs to the peptidase S24 family. Homodimer.

It catalyses the reaction Hydrolysis of Ala-|-Gly bond in repressor LexA.. Functionally, represses a number of genes involved in the response to DNA damage (SOS response), including recA and lexA. In the presence of single-stranded DNA, RecA interacts with LexA causing an autocatalytic cleavage which disrupts the DNA-binding part of LexA, leading to derepression of the SOS regulon and eventually DNA repair. The sequence is that of LexA repressor from Parafrankia sp. (strain EAN1pec).